Reading from the N-terminus, the 347-residue chain is Violet-sensitive opsin (347 aa).

Residues 1–31 (MLEEEDFYLFKNVSNVSPFDGPQYHIAPKWA) lie on the Extracellular side of the membrane. The N-linked (GlcNAc...) asparagine glycan is linked to N12. The chain crosses the membrane as a helical span at residues 32 to 56 (FTLQAIFMGMVFLIGTPLNFIVLLV). At 57 to 68 (TIKYKKLRQPLN) the chain is on the cytoplasmic side. Residues 69–94 (YILVNITVGGFLMCIFSIFPVFVSSS) traverse the membrane as a helical segment. The Extracellular portion of the chain corresponds to 95-108 (QGYFFFGRIACSID). Cysteines 105 and 182 form a disulfide. The chain crosses the membrane as a helical span at residues 109–128 (AFVGTLTGLVTGWSLAFLAF). The Cytoplasmic portion of the chain corresponds to 129–147 (ERYIVICKPMGNFNFSSSH). A helical membrane pass occupies residues 148–171 (ALAVVICTWIIGIVVSVPPFLGWS). The Extracellular segment spans residues 172 to 197 (RYMPEGLQCSCGPDWYTVGTKYRSEY). A helical membrane pass occupies residues 198 to 225 (YTWFIFIFCFVIPLSLICFSYGRLLGAL). Topologically, residues 226-247 (RAVAAQQQESASTQKAEREVSR) are cytoplasmic. Residues 248–271 (MVIFMVGSFCLCYVPYAAMAMYMV) form a helical membrane-spanning segment. Residues 272–279 (TNRNHGLD) are Extracellular-facing. A helical transmembrane segment spans residues 280–304 (LRLVTIPAFFSKSSCVYNPIIYSFM). Residue K291 is modified to N6-(retinylidene)lysine. Residues 305–347 (NKQFRGCIMETVCGRPMSDDSSVSSTSQRTEVSTVSSSQVSPA) lie on the Cytoplasmic side of the membrane. The tract at residues 323–347 (DDSSVSSTSQRTEVSTVSSSQVSPA) is disordered.

Belongs to the G-protein coupled receptor 1 family. Opsin subfamily. In terms of processing, phosphorylated on some or all of the serine and threonine residues present in the C-terminal region. As to expression, the color pigments are found in the cone photoreceptor cells.

The protein localises to the membrane. Functionally, visual pigments are the light-absorbing molecules that mediate vision. They consist of an apoprotein, opsin, covalently linked to cis-retinal. This Xenopus laevis (African clawed frog) protein is Violet-sensitive opsin.